The primary structure comprises 155 residues: Secreted RxLR effector protein 38 (155 aa).

The first 17 residues, 1–17, serve as a signal peptide directing secretion; it reads MHLIYIVMAATATTLHA. Positions 49 to 64 match the RxLR-dEER motif; it reads RFLRGAYEDVHREEER.

This sequence belongs to the RxLR effector family.

It localises to the secreted. The protein resides in the host nucleus. It is found in the host cytoplasm. Its function is as follows. Secreted effector that completely suppresses the host cell death induced by cell death-inducing proteins. The protein is Secreted RxLR effector protein 38 of Plasmopara viticola (Downy mildew of grapevine).